A 273-amino-acid chain; its full sequence is Type III pantothenate kinase (273 aa).

Residue 5 to 12 (DVGNSHVV) participates in ATP binding. 112-115 (GTDL) contributes to the substrate binding site. Asp-114 serves as the catalytic Proton acceptor. A K(+)-binding site is contributed by Asp-134. Residue Thr-137 participates in ATP binding. Thr-189 serves as a coordination point for substrate.

Belongs to the type III pantothenate kinase family. As to quaternary structure, homodimer. Requires NH4(+) as cofactor. It depends on K(+) as a cofactor.

The protein localises to the cytoplasm. The enzyme catalyses (R)-pantothenate + ATP = (R)-4'-phosphopantothenate + ADP + H(+). Its pathway is cofactor biosynthesis; coenzyme A biosynthesis; CoA from (R)-pantothenate: step 1/5. Catalyzes the phosphorylation of pantothenate (Pan), the first step in CoA biosynthesis. The sequence is that of Type III pantothenate kinase from Treponema pallidum (strain Nichols).